The sequence spans 386 residues: MEEIENQSKRRIVSKKEINELSIYIGGFKYWKFLNEDCKIEVLKYLDYCSRCQLSICSKSDHKLVSITPLYVYEIEISDNERSLHSTSTKDFENIVVRVKFSQFSGYRFEVVFWQVEEDVHIRWFKYFGFKQKSVRSLIWKSCNYYEQSVKFAEKWMKVCNYEFQSINVDMNKYPMKSSTVRSLARCKTIRINATDIATYSWWLEKCPEKLDYLELKTLYSNKDTFTIPTDFLDFSQIKNAGTFYFWCRSAFTDEQFLNLKAKKFGFHCVNITANGINDFIKKWVNGHGVNEFQKALLWSAKLNNSFMIMRGIEFRSWDQTFREQEAEFCSAFNEEFLDGEKIQVYSRIDPYESITIYFSPDTISIIATGHRMTRNKKTFTRYQVP.

Residues 29–76 (KYWKFLNEDCKIEVLKYLDYCSRCQLSICSKSDHKLVSITPLYVYEIE) form the F-box domain.

This is an uncharacterized protein from Caenorhabditis elegans.